A 229-amino-acid polypeptide reads, in one-letter code: Heptaprenylglyceryl phosphate synthase (229 aa).

Lys-12 is a sn-glycerol 1-phosphate binding site. Residues Asp-14 and Ser-40 each coordinate Mg(2+). Sn-glycerol 1-phosphate-binding positions include 159 to 164, Gly-189, and 209 to 210; these read YLEYSG and GN.

It belongs to the GGGP/HepGP synthase family. Group I subfamily. Homodimer. Mg(2+) serves as cofactor.

It carries out the reaction sn-glycerol 1-phosphate + all-trans-heptaprenyl diphosphate = 3-heptaprenyl-sn-glycero-1-phosphate + diphosphate. The protein operates within membrane lipid metabolism; glycerophospholipid metabolism. Its function is as follows. Prenyltransferase that catalyzes in vivo the transfer of the heptaprenyl moiety of heptaprenyl pyrophosphate (HepPP; 35 carbon atoms) to the C3 hydroxyl of sn-glycerol-1-phosphate (G1P), producing heptaprenylglyceryl phosphate (HepGP). This reaction is an ether-bond-formation step in the biosynthesis of archaea-type G1P-based membrane lipids found in Bacillales. The sequence is that of Heptaprenylglyceryl phosphate synthase from Bacillus cereus (strain ATCC 14579 / DSM 31 / CCUG 7414 / JCM 2152 / NBRC 15305 / NCIMB 9373 / NCTC 2599 / NRRL B-3711).